We begin with the raw amino-acid sequence, 58 residues long: GSLLLVLFLLSVICYAEIAAGPTKCQYGRPCDSDRDCCWEYRCLSSGEEYTCKQDPGP.

An N-terminal signal peptide occupies residues 1–16; the sequence is GSLLLVLFLLSVICYA. A propeptide spanning residues 17-26 is cleaved from the precursor; that stretch reads EIAAGPTKCQ. 3 disulfide bridges follow: Cys25–Cys38, Cys31–Cys43, and Cys37–Cys52.

This sequence belongs to the scorpion calcin-like family. KTX subfamily. As to expression, expressed by the venom gland.

The protein localises to the secreted. In terms of biological role, may inhibit voltage-gated potassium channels Kv1.1/KCNA1, hKv1.2/KCNA2, and Kv1.3/KCNA3. May also increase intracellular calcium release through the activation of nuclear inositol 1,4,5-trisphosphate receptors (ITPR) of cardiomyocytes, thereby causing an increase in the contraction frequency of these cells. The protein is Putative calcium channel toxin 196 of Lychas mucronatus (Chinese swimming scorpion).